The primary structure comprises 537 residues: Woronin body major protein hexA (537 aa).

Composition is skewed to basic and acidic residues over residues 1–17 (MYSV…RDAQ), 59–70 (DRTSHVEREDTR), and 116–134 (DSRV…RSEN). Disordered stretches follow at residues 1 to 20 (MYSV…QRTA), 59 to 79 (DRTS…PDPR), 116 to 200 (DSRV…KPVY), and 269 to 295 (PKPL…SRPS). The segment covering 135–144 (NAKQNKNKNN) has biased composition (low complexity). Positions 272–281 (LETRKGDSFS) are enriched in basic and acidic residues.

The protein belongs to the eIF-5A family. Hex1 subfamily. As to quaternary structure, forms oligomers. Self-assembles into hexagonal rods. Binds directly or indirectly to the Woronin body tether lah.

The protein localises to the cell septum. Its subcellular location is the cytoplasm. Functionally, major component of Woronin bodies, fungal-specific organelles that occlude septal pores in order to separate intact from damaged compartments. HexA binds directly or indirectly to the Woronin body tether that in turn is anchored at the rim of the septal pore. Woronin bodies are important for stress resistance and virulence. This Aspergillus fumigatus (strain ATCC MYA-4609 / CBS 101355 / FGSC A1100 / Af293) (Neosartorya fumigata) protein is Woronin body major protein hexA.